The chain runs to 148 residues: 1,4-dihydroxy-2-naphthoyl-CoA hydrolase (148 aa).

Residue aspartate 15 is part of the active site.

This sequence belongs to the 4-hydroxybenzoyl-CoA thioesterase family. DHNA-CoA hydrolase subfamily.

The catalysed reaction is 1,4-dihydroxy-2-naphthoyl-CoA + H2O = 1,4-dihydroxy-2-naphthoate + CoA + H(+). It functions in the pathway cofactor biosynthesis; phylloquinone biosynthesis. The protein operates within quinol/quinone metabolism; 1,4-dihydroxy-2-naphthoate biosynthesis; 1,4-dihydroxy-2-naphthoate from chorismate: step 7/7. Functionally, catalyzes the hydrolysis of 1,4-dihydroxy-2-naphthoyl-CoA (DHNA-CoA) to 1,4-dihydroxy-2-naphthoate (DHNA), a reaction involved in phylloquinone (vitamin K1) biosynthesis. The chain is 1,4-dihydroxy-2-naphthoyl-CoA hydrolase from Nostoc punctiforme (strain ATCC 29133 / PCC 73102).